The sequence spans 181 residues: NADH-quinone oxidoreductase subunit B 2 (181 aa).

C44, C45, C110, and C139 together coordinate [4Fe-4S] cluster.

This sequence belongs to the complex I 20 kDa subunit family. As to quaternary structure, NDH-1 is composed of 14 different subunits. Subunits NuoB, C, D, E, F, and G constitute the peripheral sector of the complex. [4Fe-4S] cluster serves as cofactor.

Its subcellular location is the cell inner membrane. It carries out the reaction a quinone + NADH + 5 H(+)(in) = a quinol + NAD(+) + 4 H(+)(out). In terms of biological role, NDH-1 shuttles electrons from NADH, via FMN and iron-sulfur (Fe-S) centers, to quinones in the respiratory chain. The immediate electron acceptor for the enzyme in this species is believed to be a menaquinone. Couples the redox reaction to proton translocation (for every two electrons transferred, four hydrogen ions are translocated across the cytoplasmic membrane), and thus conserves the redox energy in a proton gradient. This chain is NADH-quinone oxidoreductase subunit B 2, found in Cytophaga hutchinsonii (strain ATCC 33406 / DSM 1761 / CIP 103989 / NBRC 15051 / NCIMB 9469 / D465).